Reading from the N-terminus, the 160-residue chain is Phosphopantetheine adenylyltransferase (160 aa).

A substrate-binding site is contributed by Ser-10. ATP contacts are provided by residues 10 to 11 (SF) and His-18. Substrate-binding residues include Lys-42, Thr-74, and Arg-88. ATP contacts are provided by residues 89 to 91 (GLR), Glu-99, and 124 to 130 (YSFVSST).

The protein belongs to the bacterial CoaD family. In terms of assembly, homohexamer. It depends on Mg(2+) as a cofactor.

Its subcellular location is the cytoplasm. It carries out the reaction (R)-4'-phosphopantetheine + ATP + H(+) = 3'-dephospho-CoA + diphosphate. Its pathway is cofactor biosynthesis; coenzyme A biosynthesis; CoA from (R)-pantothenate: step 4/5. Its function is as follows. Reversibly transfers an adenylyl group from ATP to 4'-phosphopantetheine, yielding dephospho-CoA (dPCoA) and pyrophosphate. The chain is Phosphopantetheine adenylyltransferase from Leptospira biflexa serovar Patoc (strain Patoc 1 / Ames).